The following is a 354-amino-acid chain: Chorismate synthase (354 aa).

Residue arginine 46 participates in NADP(+) binding. FMN-binding positions include 123-125 (RVS), 233-234 (NG), glycine 273, 288-292 (KPTPS), and arginine 314.

Belongs to the chorismate synthase family. As to quaternary structure, homotetramer. Requires FMNH2 as cofactor.

The catalysed reaction is 5-O-(1-carboxyvinyl)-3-phosphoshikimate = chorismate + phosphate. It functions in the pathway metabolic intermediate biosynthesis; chorismate biosynthesis; chorismate from D-erythrose 4-phosphate and phosphoenolpyruvate: step 7/7. In terms of biological role, catalyzes the anti-1,4-elimination of the C-3 phosphate and the C-6 proR hydrogen from 5-enolpyruvylshikimate-3-phosphate (EPSP) to yield chorismate, which is the branch point compound that serves as the starting substrate for the three terminal pathways of aromatic amino acid biosynthesis. This reaction introduces a second double bond into the aromatic ring system. This Campylobacter curvus (strain 525.92) protein is Chorismate synthase.